The sequence spans 399 residues: 4-hydroxy-3-methylbut-2-enyl diphosphate reductase (399 aa).

C66 serves as a coordination point for [4Fe-4S] cluster. H96 is a binding site for (2E)-4-hydroxy-3-methylbut-2-enyl diphosphate. H96 contributes to the dimethylallyl diphosphate binding site. Residue H96 coordinates isopentenyl diphosphate. C157 provides a ligand contact to [4Fe-4S] cluster. H185 is a binding site for (2E)-4-hydroxy-3-methylbut-2-enyl diphosphate. Position 185 (H185) interacts with dimethylallyl diphosphate. Isopentenyl diphosphate is bound at residue H185. Residue E187 is the Proton donor of the active site. T250 serves as a coordination point for (2E)-4-hydroxy-3-methylbut-2-enyl diphosphate. C288 contributes to the [4Fe-4S] cluster binding site. Residues S317, S318, N319, and S380 each contribute to the (2E)-4-hydroxy-3-methylbut-2-enyl diphosphate site. Positions 317, 318, 319, and 380 each coordinate dimethylallyl diphosphate. Isopentenyl diphosphate contacts are provided by S317, S318, N319, and S380.

The protein belongs to the IspH family. It depends on [4Fe-4S] cluster as a cofactor.

The enzyme catalyses isopentenyl diphosphate + 2 oxidized [2Fe-2S]-[ferredoxin] + H2O = (2E)-4-hydroxy-3-methylbut-2-enyl diphosphate + 2 reduced [2Fe-2S]-[ferredoxin] + 2 H(+). It carries out the reaction dimethylallyl diphosphate + 2 oxidized [2Fe-2S]-[ferredoxin] + H2O = (2E)-4-hydroxy-3-methylbut-2-enyl diphosphate + 2 reduced [2Fe-2S]-[ferredoxin] + 2 H(+). The protein operates within isoprenoid biosynthesis; dimethylallyl diphosphate biosynthesis; dimethylallyl diphosphate from (2E)-4-hydroxy-3-methylbutenyl diphosphate: step 1/1. It functions in the pathway isoprenoid biosynthesis; isopentenyl diphosphate biosynthesis via DXP pathway; isopentenyl diphosphate from 1-deoxy-D-xylulose 5-phosphate: step 6/6. In terms of biological role, catalyzes the conversion of 1-hydroxy-2-methyl-2-(E)-butenyl 4-diphosphate (HMBPP) into a mixture of isopentenyl diphosphate (IPP) and dimethylallyl diphosphate (DMAPP). Acts in the terminal step of the DOXP/MEP pathway for isoprenoid precursor biosynthesis. This Parasynechococcus marenigrum (strain WH8102) protein is 4-hydroxy-3-methylbut-2-enyl diphosphate reductase.